A 294-amino-acid chain; its full sequence is Very long chain fatty acid elongase 5 (294 aa).

7 consecutive transmembrane segments (helical) span residues 26–46, 64–84, 112–132, 141–161, 172–192, 207–227, and 231–251; these read WLLLDNYLPTLSFTIIYLLIV, ILVVYNMALTLLSLYMFYELV, VLWWYYFSKLIEFMDTFFFIL, FLHIYHHFTMLNIWWFVMNWV, FNSFIHVLMYSYYGLSAIPAI, LVQFVLTMIQTSCAVVWPCGF, and WLYFQISYMITLIILFSNFYI. The disordered stretch occupies residues 261–294; that stretch reads AKKDPRHNGIKSVNGHSNGASHTNAVKNRKARTD. A compositionally biased stretch (polar residues) spans 274-286; sequence NGHSNGASHTNAV.

It belongs to the ELO family. ELOVL5 subfamily. As to expression, expression is highest in intestine, followed by brain and heart, and lowest in gill. Also expressed in liver, spleen and muscle.

It is found in the endoplasmic reticulum membrane. The protein resides in the cell projection. Its subcellular location is the dendrite. The catalysed reaction is a very-long-chain acyl-CoA + malonyl-CoA + H(+) = a very-long-chain 3-oxoacyl-CoA + CO2 + CoA. It carries out the reaction (6Z,9Z,12Z)-octadecatrienoyl-CoA + malonyl-CoA + H(+) = (8Z,11Z,14Z)-3-oxoeicosatrienoyl-CoA + CO2 + CoA. The enzyme catalyses (9Z,12Z,15Z)-octadecatrienoyl-CoA + malonyl-CoA + H(+) = (11Z,14Z,17Z)-3-oxoeicosatrienoyl-CoA + CO2 + CoA. It catalyses the reaction (9Z)-hexadecenoyl-CoA + malonyl-CoA + H(+) = 3-oxo-(11Z)-octadecenoyl-CoA + CO2 + CoA. The catalysed reaction is (9Z)-octadecenoyl-CoA + malonyl-CoA + H(+) = 3-oxo-(11Z)-eicosenoyl-CoA + CO2 + CoA. It carries out the reaction (11Z)-octadecenoyl-CoA + malonyl-CoA + H(+) = 3-oxo-(13Z)-eicosenoyl-CoA + CO2 + CoA. The enzyme catalyses (9Z,12Z)-octadecadienoyl-CoA + malonyl-CoA + H(+) = (11Z,14Z)-3-oxoicosa-11,14-dienoyl-CoA + CO2 + CoA. It catalyses the reaction (6Z,9Z,12Z,15Z)-octadecatetraenoyl-CoA + malonyl-CoA + H(+) = (8Z,11Z,14Z,17Z)-3-oxoicosatetraenoyl-CoA + CO2 + CoA. The catalysed reaction is (5Z,8Z,11Z,14Z)-eicosatetraenoyl-CoA + malonyl-CoA + H(+) = (7Z,10Z,13Z,16Z)-3-oxodocosatetraenoyl-CoA + CO2 + CoA. It carries out the reaction (5Z,8Z,11Z,14Z,17Z)-eicosapentaenoyl-CoA + malonyl-CoA + H(+) = 3-oxo-(7Z,10Z,13Z,16Z,19Z)-docosapentaenoyl-CoA + CO2 + CoA. It participates in lipid metabolism; polyunsaturated fatty acid biosynthesis. Catalyzes the first and rate-limiting reaction of the four reactions that constitute the long-chain fatty acids elongation cycle. This endoplasmic reticulum-bound enzymatic process allows the addition of 2 carbons to the chain of long- and very long-chain fatty acids (VLCFAs) per cycle. Condensing enzyme that acts specifically toward polyunsaturated acyl-CoA with the higher activity toward C18:3(n-6) acyl-CoA. May participate in the production of monounsaturated and of polyunsaturated VLCFAs of different chain lengths that are involved in multiple biological processes as precursors of membrane lipids and lipid mediators. In conditions where the essential linoleic and alpha linoleic fatty acids are lacking it is also involved in the synthesis of Mead acid from oleic acid. The chain is Very long chain fatty acid elongase 5 from Tachysurus fulvidraco (Yellow catfish).